A 207-amino-acid chain; its full sequence is Octanoyltransferase (207 aa).

The BPL/LPL catalytic domain maps to 27–203 (ADTEDELWVV…HLETQFTPKA (177 aa)). Residues 66–73 (RGGQITYH), 133–135 (SLG), and 146–148 (GLA) each bind substrate. The active-site Acyl-thioester intermediate is cysteine 164.

This sequence belongs to the LipB family.

The protein localises to the cytoplasm. It catalyses the reaction octanoyl-[ACP] + L-lysyl-[protein] = N(6)-octanoyl-L-lysyl-[protein] + holo-[ACP] + H(+). Its pathway is protein modification; protein lipoylation via endogenous pathway; protein N(6)-(lipoyl)lysine from octanoyl-[acyl-carrier-protein]: step 1/2. Functionally, catalyzes the transfer of endogenously produced octanoic acid from octanoyl-acyl-carrier-protein onto the lipoyl domains of lipoate-dependent enzymes. Lipoyl-ACP can also act as a substrate although octanoyl-ACP is likely to be the physiological substrate. This Neisseria meningitidis serogroup A / serotype 4A (strain DSM 15465 / Z2491) protein is Octanoyltransferase.